The following is a 1891-amino-acid chain: Endoribonuclease Dicer-L (1891 aa).

A Helicase ATP-binding domain is found at Leu41 to Glu217. Leu54–Thr61 provides a ligand contact to ATP. Positions Asp165–His168 match the DECH box motif. Residues Ser425–Glu594 form the Helicase C-terminal domain. The Dicer dsRNA-binding fold domain maps to Ala622–Tyr714. Residues Lys887–Pro1034 form the PAZ domain. RNase III domains lie at Thr1248–Gly1379 and Phe1635–Gly1793. Positions 1292, 1370, 1373, 1674, 1779, and 1782 each coordinate Mg(2+). A DRBM domain is found at Val1818 to Ala1883.

The protein belongs to the helicase family. Dicer subfamily. In terms of assembly, component of the RISC loading complex (RLC), or micro-RNA (miRNA) loading complex (miRLC), which is composed of dicer1, ago2 and tarbp2; dicer1 and tarbp2 are required to process precursor miRNAs (pre-miRNAs) to mature miRNAs and then load them onto ago2. Note that the trimeric RLC/miRLC is also referred to as RISC. Requires Mg(2+) as cofactor. Mn(2+) serves as cofactor.

Its subcellular location is the cytoplasm. The enzyme catalyses Endonucleolytic cleavage to 5'-phosphomonoester.. Double-stranded RNA (dsRNA) endoribonuclease playing a central role in short dsRNA-mediated post-transcriptional gene silencing. Cleaves naturally occurring long dsRNAs and short hairpin pre-microRNAs (miRNA) into fragments of 21 to 23 nucleotides with 3' overhang of two nucleotides, producing respectively short interfering RNAs (siRNA) and mature microRNAs. SiRNAs and miRNAs serve as guide to direct the RNA-induced silencing complex (RISC) to complementary RNAs to degrade them or prevent their translation. Gene silencing mediated by siRNAs, also called RNA interference, controls the elimination of transcripts from mobile and repetitive DNA elements of the genome but also the degradation of exogenous RNA of viral origin for instance. The miRNA pathway on the other side is a mean to specifically regulate the expression of target genes. During embryonic development, at the left-right organizer, post-transcriptionally regulates the expression of dand5 in flow sensor cells. In post-flow stages, acts along with Bicc1 to repress dand5 mRNA translation and decay. Decreased Dand5 expression lifts repression of Nodal and defines leftness by induction of the lateral plate mesoderm Nodal signaling cascade. This chain is Endoribonuclease Dicer-L (dicer1.L), found in Xenopus laevis (African clawed frog).